A 419-amino-acid polypeptide reads, in one-letter code: Voltage-gated potassium channel subunit beta-1 (419 aa).

The disordered stretch occupies residues 1 to 51; the sequence is MLAARTGAAGSQIAEESSKLRKQAAFSGGSKDRSPKKASENVKDSSLSPSG. Residues 30–43 are compositionally biased toward basic and acidic residues; the sequence is SKDRSPKKASENVK. Residues T108, W109, Q115, and D137 each contribute to the NADP(+) site. Y142 serves as the catalytic Proton donor/acceptor. Residues N210, S240, R241, Q266, W295, S296, P297, L298, A299, C300, K306, R316, G375, S377, Q381, E384, and N385 each contribute to the NADP(+) site.

It belongs to the shaker potassium channel beta subunit family. Homotetramer. Interaction with tetrameric potassium channel alpha subunits gives rise to a heterooctamer. Identified in potassium channel complexes containing KCNA1, KCNA2, KCNA4, KCNA5, KCNA6, KCNAB1 and KCNAB2. Part of a complex containing KCNA1, KCNA4 and LGI1; interaction with LGI1 inhibits down-regulation of KCNA1 channel activity. Interacts with the dimer formed by GNB1 and GNG2; this enhances KCNA1 binding. Interacts with SQSTM1. As to expression, detected in portal vein myocytes (at protein level).

Its subcellular location is the cytoplasm. The protein resides in the membrane. It localises to the cell membrane. The enzyme catalyses a primary alcohol + NADP(+) = an aldehyde + NADPH + H(+). It carries out the reaction a secondary alcohol + NADP(+) = a ketone + NADPH + H(+). Regulatory subunit of the voltage-gated potassium (Kv) channels composed of pore-forming and potassium-conducting alpha subunits and of regulatory beta subunits. The beta-1/KCNAB1 cytoplasmic subunit mediates closure of delayed rectifier potassium channels by physically obstructing the pore via its N-terminal domain and increases the speed of channel closure for other family members. Promotes the inactivation of KCNA1, KCNA2, KCNA4, KCNA5 and KCNA6 alpha subunit-containing channels. Displays nicotinamide adenine dinucleotide phosphate (NADPH)-dependent aldoketoreductase activity by catalyzing the NADPH-dependent reduction of a variety of endogenous aldehydes and ketones. The binding of NADPH is required for efficient down-regulation of potassium channel activity. Oxidation of the bound NADPH restrains N-terminal domain from blocking the channel, thereby decreasing N-type inactivation of potassium channel activity. This Oryctolagus cuniculus (Rabbit) protein is Voltage-gated potassium channel subunit beta-1 (KCNAB1).